Reading from the N-terminus, the 64-residue chain is MPKMKTNKSVSARFKLTASGQLKRTRPGKRHKLSKKSSQEKRNLSKQPLVDKGQVGMYKRMMLV.

A disordered region spans residues 1–55 (MPKMKTNKSVSARFKLTASGQLKRTRPGKRHKLSKKSSQEKRNLSKQPLVDKGQV). Positions 23–35 (KRTRPGKRHKLSK) are enriched in basic residues.

This sequence belongs to the bacterial ribosomal protein bL35 family.

This chain is Large ribosomal subunit protein bL35, found in Chlamydia pneumoniae (Chlamydophila pneumoniae).